The primary structure comprises 344 residues: Phosphate acyltransferase (344 aa).

This sequence belongs to the PlsX family. Homodimer. Probably interacts with PlsY.

Its subcellular location is the cytoplasm. It carries out the reaction a fatty acyl-[ACP] + phosphate = an acyl phosphate + holo-[ACP]. It participates in lipid metabolism; phospholipid metabolism. Its function is as follows. Catalyzes the reversible formation of acyl-phosphate (acyl-PO(4)) from acyl-[acyl-carrier-protein] (acyl-ACP). This enzyme utilizes acyl-ACP as fatty acyl donor, but not acyl-CoA. The chain is Phosphate acyltransferase from Erwinia tasmaniensis (strain DSM 17950 / CFBP 7177 / CIP 109463 / NCPPB 4357 / Et1/99).